A 946-amino-acid polypeptide reads, in one-letter code: Aminopeptidase N (946 aa).

A signal peptide spans 1–15 (MRLLICLTLLGLVCG). N-linked (GlcNAc...) asparagine glycosylation is present at Asn60. Position 308 to 312 (308 to 312 (GAMEN)) interacts with substrate. His344 contributes to the Zn(2+) binding site. The active-site Proton acceptor is the Glu345. Residues His348 and Glu367 each coordinate Zn(2+). 2 N-linked (GlcNAc...) asparagine glycosylation sites follow: Asn550 and Asn605. 2 cysteine pairs are disulfide-bonded: Cys715–Cys722 and Cys751–Cys787.

This sequence belongs to the peptidase M1 family. It depends on Zn(2+) as a cofactor.

It localises to the cell membrane. It catalyses the reaction Release of an N-terminal amino acid, Xaa-|-Yaa- from a peptide, amide or arylamide. Xaa is preferably Ala, but may be most amino acids including Pro (slow action). When a terminal hydrophobic residue is followed by a prolyl residue, the two may be released as an intact Xaa-Pro dipeptide.. The polypeptide is Aminopeptidase N (APN1) (Plutella xylostella (Diamondback moth)).